The sequence spans 20 residues: Putative serine protease (20 aa).

This sequence belongs to the peptidase S1 family.

Its subcellular location is the secreted. Its function is as follows. Binds the A.niger cell wall component alpha-1,3-glucan, a fungal pathogen-associated molecular pattern (PAMP) that activates the host immune response. The chain is Putative serine protease from Galleria mellonella (Greater wax moth).